The sequence spans 213 residues: Uridine kinase (213 aa).

12–19 lines the ATP pocket; it reads GGSCSGKT.

Belongs to the uridine kinase family.

Its subcellular location is the cytoplasm. The enzyme catalyses uridine + ATP = UMP + ADP + H(+). It carries out the reaction cytidine + ATP = CMP + ADP + H(+). It functions in the pathway pyrimidine metabolism; CTP biosynthesis via salvage pathway; CTP from cytidine: step 1/3. It participates in pyrimidine metabolism; UMP biosynthesis via salvage pathway; UMP from uridine: step 1/1. The chain is Uridine kinase (udk) from Mycoplasma genitalium (strain ATCC 33530 / DSM 19775 / NCTC 10195 / G37) (Mycoplasmoides genitalium).